The sequence spans 425 residues: Sensor histidine kinase NarS (425 aa).

The next 6 membrane-spanning stretches (helical) occupy residues 42-62 (IASVLRIGVVGLMVAAMVVGT), 71-91 (IVLIGVYAVAALWALLLAYSA), 107-127 (LEPFAFTAVDVLILTGFQLLS), 130-150 (GIYPLLIMILLPVLVGLDVST), 155-175 (VVLACTLVGFAVAVLGDPVML), and 181-201 (PETIFRFALYAFLCATALMVV). The Histidine kinase domain maps to 224–425 (QTMTASEVLQ…HVCVELPLKR (202 aa)). Position 241 is a phosphohistidine; by autocatalysis (His-241).

Post-translationally, autophosphorylated on His-241.

The protein resides in the cell membrane. The enzyme catalyses ATP + protein L-histidine = ADP + protein N-phospho-L-histidine.. Member of the two-component regulatory system NarS/NarL involved in gene expression during aerobic nitrate metabolism. Plays therefore a crucial role in anaerobic survival of mycobacteria in host. Functions as a sensor protein kinase which is autophosphorylated at a histidine residue and transfers its phosphate group to the conserved aspartic acid residue in the regulatory domain of NarL. In turn, NarL binds to the upstream promoter regions of target genes to regulate their expression during aerobic nitrate metabolism. This is Sensor histidine kinase NarS from Mycobacterium tuberculosis (strain ATCC 25618 / H37Rv).